Here is a 543-residue protein sequence, read N- to C-terminus: Glucose transporter HT1 (543 aa).

Residues 1 to 24 (MPEYPTEDTNASGKTSGSSPDDHT) form a disordered region. Topologically, residues 1–38 (MPEYPTEDTNASGKTSGSSPDDHTDDNAPSFFSCENLC) are cytoplasmic. Positions 7-19 (EDTNASGKTSGSS) are enriched in polar residues. Residues 39–59 (IVQVPVSTGSLNGFSIGFVAV) form a helical membrane-spanning segment. At 60–120 (YMHLYEIFSG…GSGYNSLESG (61 aa)) the chain is on the extracellular side. Residues N90 and N91 are each glycosylated (N-linked (GlcNAc...) asparagine). The chain crosses the membrane as a helical span at residues 121 to 141 (LFACSMIVGSMIGSIFAGKFL). The Cytoplasmic segment spans residues 142-147 (SKFGLK). The helical transmembrane segment at 148 to 168 (MSFIVSGVLGIVGSALIHVAT) threads the bilayer. The Extracellular portion of the chain corresponds to 169 to 172 (RGST). The chain crosses the membrane as a helical span at residues 173–193 (LWVMCVGRFLMGLVLGLVCVA). Residues 194-212 (SPMYVNENAHPKYRKTIGV) are Cytoplasmic-facing. The chain crosses the membrane as a helical span at residues 213–233 (LFQVFTTFGIMFAALLGLAIV). At 234–248 (KTPGHDKASGLLWRM) the chain is on the extracellular side. A helical transmembrane segment spans residues 249 to 269 (QVFCSVSTALSALLLVLGLVV). At 270-300 (RKSKTSFAGGVDSAGEGVLDPNEYSVRQMLG) the chain is on the cytoplasmic side. Residues 301-321 (PLAVGAVTAGTLQLTGINAVM) form a helical membrane-spanning segment. Topologically, residues 322-337 (NYAPEIMRNIGMDPME) are extracellular. A helical transmembrane segment spans residues 338-358 (GNSAVMSWNFVTALVAIPLVS). At 359 to 364 (RFTMRQ) the chain is on the cytoplasmic side. Residues 365-385 (LFLACSFMASCACLIMCGIPV) traverse the membrane as a helical segment. Residues 386–400 (YPGVASVDNRNIVAT) are Extracellular-facing. Residues 401-421 (VGIAVFIAAFEFGVGSCFFVL) traverse the membrane as a helical segment. Residues 422-436 (AQDLFPRSFRPTGSS) lie on the Cytoplasmic side of the membrane. A helical transmembrane segment spans residues 437–457 (FVVMAQFIFNIMINLLYPITV). The Extracellular portion of the chain corresponds to 458-470 (EAISGGKGKSPEK). Residues 471–491 (GQSVSFIIFGIIGIICFVLQL) form a helical membrane-spanning segment. Residues 492–543 (RYLTPWEDGQGTSTSPTARCNAPTSPNNGEGEPATADMSPVEMSTPKHSGAA) are Cytoplasmic-facing. The span at 503–519 (TSTSPTARCNAPTSPNN) shows a compositional bias: polar residues. Residues 503-543 (TSTSPTARCNAPTSPNNGEGEPATADMSPVEMSTPKHSGAA) form a disordered region.

This sequence belongs to the major facilitator superfamily. Sugar transporter (TC 2.A.1.1) family.

It is found in the membrane. Facilitative glucose transporter. Binds D-fructose and cytochalasin-B, but not D-galactose. This chain is Glucose transporter HT1 (HT1), found in Trypanosoma vivax (Duttonella vivax).